The primary structure comprises 276 residues: MSIRKLKPTSAGRRFQTVSTFEEITRSEPEKSLTEGITSSCGRNCYGRITSRRRGGGNKRLYRIIDFKRDKFGVPAKVFSIEYDPNRSARIALLHYADGEKRYILAPVGIKVGDMITAGDAADIKPGNALQLKKIPVGTLLHNIELNPGRGGQMCRAAGTYAQLVAKEGKYALLRLPSGEVRNVLSTCLATIGQVGNVMHENISIGKAGRNRWLGKRPEVRGVAMNPVDHPLGGGEGKSSGGRHPVTPWGKPTKGYKTRNKKKPSSKLIVKRRGQK.

The disordered stretch occupies residues 224 to 276 (AMNPVDHPLGGGEGKSSGGRHPVTPWGKPTKGYKTRNKKKPSSKLIVKRRGQK). Residues 254–276 (KGYKTRNKKKPSSKLIVKRRGQK) show a composition bias toward basic residues.

The protein belongs to the universal ribosomal protein uL2 family. In terms of assembly, part of the 50S ribosomal subunit. Forms a bridge to the 30S subunit in the 70S ribosome.

Its function is as follows. One of the primary rRNA binding proteins. Required for association of the 30S and 50S subunits to form the 70S ribosome, for tRNA binding and peptide bond formation. It has been suggested to have peptidyltransferase activity; this is somewhat controversial. Makes several contacts with the 16S rRNA in the 70S ribosome. In Solidesulfovibrio magneticus (strain ATCC 700980 / DSM 13731 / RS-1) (Desulfovibrio magneticus), this protein is Large ribosomal subunit protein uL2.